A 702-amino-acid polypeptide reads, in one-letter code: MKTVVILAGLVALALSSAVPPPKYQHHYKTSPVDAIFVEKQKKVFSLFKNVNQLDYEAEYYKIGKDYDVEANIDNYSNKKVVEDFLLLYRTGFMPKGFEFSIFYERMREEAIALFELFYYAKDFETFYKTASFARVHVNEGMFLYAYYIAVIQRMDTNGLVLPAPYEVYPQYFTNMEVLFKVDRIKMQDGFLNKDLAAYYGMYHENDNYVFYANYSNSLSYPNEEERIAYFYEDIGLNSYYYYFHMHLPFWWNSEKYGPFKERRGEIYYYFYQQLIARYYLERLTNGLGEIPEFSWYSPVKTGYYPMLYGSYYPFAQRPNYYDIHNDKNYEQIRFLDMFEMTFLQYLQKGHFKAFDKEINFHDVKAVNFVGNYWQANADLYNEEVTKLYQRSYEINARHVLGAAPKPFNKYSFIPSALDFYQTSLRDPVFYQLYDRIINYINEFKQYLQPYNQNDLHFVGVKISDVKVDKLATYFEYYDFDVSNSVFVSKKDIKNFPYGYKVRQPRLNHKPFSVSIGVKSDVAVDAVFKIFLGPKYDSNGFPIPLAKNWNKFYELDWFVHKVMPGQNHIVRQSSDFLFFKEDSLPMSEIYKLLDEGKIPSDMSNSSDTLPQRLMLPRGTKDGYPFQLFVFVYPYQAVPKEMEPFKSIVPDSKPFGYPFDRPVHPEYFKQPNMHFEDVHVYHEGEQFPYKFNVPFYVPQKVEV.

Residues 1–16 (MKTVVILAGLVALALS) form the signal peptide. N-linked (GlcNAc...) asparagine glycosylation is found at Asn75 and Asn214.

It belongs to the hemocyanin family. In terms of assembly, arylphorin is a hexamer of subunits alpha and beta. As to expression, fat body.

Its subcellular location is the secreted. It localises to the extracellular space. Its function is as follows. Arylphorin is a larval storage protein (LSP) which may serve as a storage protein used primarily as a source of aromatic amino acids for protein synthesis during metamorphosis. It is a constituent of the sclerotizing system of the cuticle, and serves as a carrier for ecdysteroid hormone. This Manduca sexta (Tobacco hawkmoth) protein is Arylphorin subunit alpha.